A 255-amino-acid polypeptide reads, in one-letter code: Urease accessory protein UreD 1 (255 aa).

It belongs to the UreD family. In terms of assembly, ureD, UreF and UreG form a complex that acts as a GTP-hydrolysis-dependent molecular chaperone, activating the urease apoprotein by helping to assemble the nickel containing metallocenter of UreC. The UreE protein probably delivers the nickel.

It is found in the cytoplasm. Its function is as follows. Required for maturation of urease via the functional incorporation of the urease nickel metallocenter. This chain is Urease accessory protein UreD 1, found in Saccharopolyspora erythraea (strain ATCC 11635 / DSM 40517 / JCM 4748 / NBRC 13426 / NCIMB 8594 / NRRL 2338).